The sequence spans 92 residues: Small ribosomal subunit protein uS19 (92 aa).

This sequence belongs to the universal ribosomal protein uS19 family.

Its function is as follows. Protein S19 forms a complex with S13 that binds strongly to the 16S ribosomal RNA. The chain is Small ribosomal subunit protein uS19 from Caulobacter sp. (strain K31).